We begin with the raw amino-acid sequence, 195 residues long: Imidazoleglycerol-phosphate dehydratase (195 aa).

This sequence belongs to the imidazoleglycerol-phosphate dehydratase family.

The protein resides in the cytoplasm. The catalysed reaction is D-erythro-1-(imidazol-4-yl)glycerol 3-phosphate = 3-(imidazol-4-yl)-2-oxopropyl phosphate + H2O. It functions in the pathway amino-acid biosynthesis; L-histidine biosynthesis; L-histidine from 5-phospho-alpha-D-ribose 1-diphosphate: step 6/9. In Geobacter sp. (strain M21), this protein is Imidazoleglycerol-phosphate dehydratase.